A 581-amino-acid chain; its full sequence is uncharacterized protein (581 aa).

The residue at position 28 (Ser28) is a Phosphoserine. Helical transmembrane passes span 61 to 81, 100 to 120, 125 to 145, 187 to 207, 214 to 234, 340 to 360, 382 to 402, 426 to 446, 458 to 478, 486 to 506, and 522 to 542; these read LVLI…AGSA, AGVL…ATFL, CVYL…ALVK, IYIL…GYIA, WIGW…LFTF, IFLF…DAWL, AVAI…IYGG, LWLM…FGIG, VGLG…MAYL, VLEA…VFTF, and ISIG…ILCG.

This sequence belongs to the major facilitator superfamily.

Its subcellular location is the cytoplasm. It is found in the cell cortex. It localises to the membrane. This is an uncharacterized protein from Schizosaccharomyces pombe (strain 972 / ATCC 24843) (Fission yeast).